Here is a 508-residue protein sequence, read N- to C-terminus: MSIDRLAAFLADARQFRTIPIMRKFLADVIEPLQVFANLREEAVFLLESKDDESPWARYSFIGVAPFLTLESETGETFLIKDENGNVQMTASTLKEAFQAVERALCVKPLAEAAPFTGGAVGFLGYDFISAIEKVPRHRAPDLAMKAGHFVFCESLFAFDHEKRELSLIHYIRLKGHETMQEKIAIYRAAEERIAALAAKASRPRAEQPLLPAEDEAERAALFSKASSNYEKEQFLRDVEAVKQYIAAGDVFQAVLSQRFSVPVQAGGFAIYRILRHINPSPYMFYFRLDGIEIVGSSPEKLIQVRNRRAEIDPIAGTRRRGRSPAEDEKLADELYHDPKERAEHYMLVDLARNDIGRVAKYGTVEVPVLMEIGKFSHVMHLISKVVGVLDDDIHPIDALLAAFPAGTVSGAPKVRAMQILQELEPTARGLYAGAIAYIGFDGSIDSCIAIRTAVIKDGYAYVQAGAGIVADSVPELEWKETRNKASALIYAIEQAERLFAKGEQIVC.

Residues Ser-49 and 282–284 (PYM) contribute to the L-tryptophan site. 317–318 (GT) contributes to the chorismate binding site. Glu-344 provides a ligand contact to Mg(2+). Chorismate-binding positions include Tyr-432, Arg-452, 466–468 (GAG), and Gly-468. A Mg(2+)-binding site is contributed by Glu-481.

It belongs to the anthranilate synthase component I family. Heterotetramer consisting of two non-identical subunits: a beta subunit (TrpG) and a large alpha subunit (TrpE). Mg(2+) serves as cofactor.

The catalysed reaction is chorismate + L-glutamine = anthranilate + pyruvate + L-glutamate + H(+). It participates in amino-acid biosynthesis; L-tryptophan biosynthesis; L-tryptophan from chorismate: step 1/5. Its activity is regulated as follows. Feedback inhibited by tryptophan. In terms of biological role, part of a heterotetrameric complex that catalyzes the two-step biosynthesis of anthranilate, an intermediate in the biosynthesis of L-tryptophan. In the first step, the glutamine-binding beta subunit (TrpG) of anthranilate synthase (AS) provides the glutamine amidotransferase activity which generates ammonia as a substrate that, along with chorismate, is used in the second step, catalyzed by the large alpha subunit of AS (TrpE) to produce anthranilate. In the absence of TrpG, TrpE can synthesize anthranilate directly from chorismate and high concentrations of ammonia. This Geobacillus stearothermophilus (Bacillus stearothermophilus) protein is Anthranilate synthase component 1 (trpE).